A 198-amino-acid chain; its full sequence is Recombination protein RecR (198 aa).

The C4-type zinc-finger motif lies at 58–73 (CSVCGNFTDKDPCAIC). The Toprim domain maps to 81–175 (SIICVIEQPK…KVTRIAHGVP (95 aa)).

The protein belongs to the RecR family.

Functionally, may play a role in DNA repair. It seems to be involved in an RecBC-independent recombinational process of DNA repair. It may act with RecF and RecO. This chain is Recombination protein RecR, found in Clostridium botulinum (strain ATCC 19397 / Type A).